Here is a 150-residue protein sequence, read N- to C-terminus: Putative F-box protein At2g33655 (150 aa).

The region spanning 1-47 is the F-box domain; it reads MEKMSDLPRELVEEILSRVPVKSMREVRVTCKTWNALSKHISKAEAA.

The sequence is that of Putative F-box protein At2g33655 from Arabidopsis thaliana (Mouse-ear cress).